The primary structure comprises 586 residues: Anaerobic glycerol-3-phosphate dehydrogenase subunit A1 (586 aa).

6–34 (SVLVIGGGSTGTGIARDLAMRGLDVTLVE) contacts FAD. The interval 559–586 (GGAVADGGRERAADRADDDALGGADGDN) is disordered. Positions 574 to 586 (ADDDALGGADGDN) are enriched in acidic residues.

This sequence belongs to the FAD-dependent glycerol-3-phosphate dehydrogenase family. Composed of a catalytic GlpA/B dimer and of membrane bound GlpC. FAD is required as a cofactor. FMN serves as cofactor.

The protein localises to the cell membrane. The enzyme catalyses a quinone + sn-glycerol 3-phosphate = dihydroxyacetone phosphate + a quinol. The protein operates within polyol metabolism; glycerol degradation via glycerol kinase pathway; glycerone phosphate from sn-glycerol 3-phosphate (anaerobic route): step 1/1. Up-regulated by glycerol and no inhibition by glucose. Functionally, conversion of glycerol 3-phosphate to dihydroxyacetone phosphate. Required for growth on glycerol and for glycerol metabolism. The protein is Anaerobic glycerol-3-phosphate dehydrogenase subunit A1 (gpdA1) of Haloferax volcanii (strain ATCC 29605 / DSM 3757 / JCM 8879 / NBRC 14742 / NCIMB 2012 / VKM B-1768 / DS2) (Halobacterium volcanii).